We begin with the raw amino-acid sequence, 133 residues long: Ribosome-binding factor A (133 aa).

This sequence belongs to the RbfA family. As to quaternary structure, monomer. Binds 30S ribosomal subunits, but not 50S ribosomal subunits or 70S ribosomes.

It is found in the cytoplasm. Functionally, one of several proteins that assist in the late maturation steps of the functional core of the 30S ribosomal subunit. Associates with free 30S ribosomal subunits (but not with 30S subunits that are part of 70S ribosomes or polysomes). Required for efficient processing of 16S rRNA. May interact with the 5'-terminal helix region of 16S rRNA. The polypeptide is Ribosome-binding factor A (Acinetobacter baylyi (strain ATCC 33305 / BD413 / ADP1)).